Reading from the N-terminus, the 681-residue chain is DNA ligase (681 aa).

NAD(+) is bound by residues 32-36 (DIEYD), 81-82 (SL), and Glu-113. Lys-115 functions as the N6-AMP-lysine intermediate in the catalytic mechanism. NAD(+)-binding residues include Arg-136, Glu-173, Lys-290, and Lys-314. Positions 408, 411, 426, and 432 each coordinate Zn(2+). The BRCT domain maps to 596-681 (EIDSPFAGKT…LNNHGDVSTL (86 aa)).

This sequence belongs to the NAD-dependent DNA ligase family. LigA subfamily. Mg(2+) serves as cofactor. It depends on Mn(2+) as a cofactor.

It carries out the reaction NAD(+) + (deoxyribonucleotide)n-3'-hydroxyl + 5'-phospho-(deoxyribonucleotide)m = (deoxyribonucleotide)n+m + AMP + beta-nicotinamide D-nucleotide.. In terms of biological role, DNA ligase that catalyzes the formation of phosphodiester linkages between 5'-phosphoryl and 3'-hydroxyl groups in double-stranded DNA using NAD as a coenzyme and as the energy source for the reaction. It is essential for DNA replication and repair of damaged DNA. In Pectobacterium atrosepticum (strain SCRI 1043 / ATCC BAA-672) (Erwinia carotovora subsp. atroseptica), this protein is DNA ligase.